The chain runs to 339 residues: 3-isopropylmalate dehydrogenase (339 aa).

Residues Arg87, Arg97, Arg124, and Asp214 each coordinate substrate. Mg(2+) contacts are provided by Asp214, Asp238, and Asp242. Residue 274 to 286 coordinates NAD(+); it reads GSAPDIAGQGIAD.

The protein belongs to the isocitrate and isopropylmalate dehydrogenases family. LeuB type 2 subfamily. As to quaternary structure, homodimer. Requires Mg(2+) as cofactor. The cofactor is Mn(2+).

It localises to the cytoplasm. It carries out the reaction (2R,3S)-3-isopropylmalate + NAD(+) = 4-methyl-2-oxopentanoate + CO2 + NADH. It functions in the pathway amino-acid biosynthesis; L-leucine biosynthesis; L-leucine from 3-methyl-2-oxobutanoate: step 3/4. Functionally, catalyzes the oxidation of 3-carboxy-2-hydroxy-4-methylpentanoate (3-isopropylmalate) to 3-carboxy-4-methyl-2-oxopentanoate. The product decarboxylates to 4-methyl-2 oxopentanoate. The chain is 3-isopropylmalate dehydrogenase from Mycobacterium marinum (strain ATCC BAA-535 / M).